Consider the following 1004-residue polypeptide: MEEYEEFCEKALGRAQEASLSTGSFLPAQAESVSLIRFHGVAVLSPLLTIEKRKKIQEEKQKALDVQSRKQANRKKALLTRVQEILENVQVRKAPNASDFDQWATETIYSNPEVTDLNVPVRVPNSLPSPTEHCTSVKLEKITGLLPVNNEDQQTPKRVGLPGDSEVSGSLRQCESPESRQAEDGAALRLSSASPQETIISDVLGKEEQDPSCLAEVTPDPYIMSLQNLMKRSKEYVERELSSRSLRNSLKRSVNETHSDRENDAAKASDCVKEKAPPMPIGRHCGSAIPDKPSLNKSNVLLQGASQASSMGTAGLASFSKIDLPAGAAPPAAPDAGSDFTVIPTFVTENKVKSLKGPYAKLPSPEPSMSPTMHRRHSRSASACQILINNPVNACELSPKGKEEAVDRTAPAAAETTNESETVPKSPTDLTGVCSSNVSATKITSESTREMVVGKPSQRQQALGAHLGNNVTVERSAMEGPFIADDRGAQKVDGTCMAVPKLHELQPSSQCVSSQTLEDVCELKSASLLAKNSCNLQMELNKSYDVKHPSPLLTQTQTSRQQMDTPPVFRGNEQFVDNSFEKVKRRLDLDVDSLQKENCPYIITAGVAEQERDRLLERRYPKGFVHINKNKMLETSPKEGQELLKSKMLAFEEMRKRLEEQHAQQLSLLIAEQEREQEQLQKEIEEQEKMLKEKAVTTDVSDLNSALEWRQRTDSALLETMLSQVDSLQTSNNSGFITSALQYSFGSAGEAPFYLWGSLTSGVTRVSGTRPCGRAQAKWSQVFNPEIHAKFNKITAVAKGFLTRKLMQTDKLKQLRQTVKDTMEFIRSFQSEAPLKRGVVSAQDASLQERVLAQLRAALYGIHDIFFVMDAAERMSILHHDREARKEKLLRQMDKMKSPRVALSVATQKSLDRKKFMKVAEMGMPNKKFLLKQNPSETRVLQPNQGQNAPVHRLLSRQGTPKTSVKGVVQNRQKPSQSRVPNRAPVSGAYAGKTQRKRPNVATI.

The interval 1 to 221 (MEEYEEFCEK…SCLAEVTPDP (221 aa)) is CEP97 binding. Positions 51-90 (EKRKKIQEEKQKALDVQSRKQANRKKALLTRVQEILENVQ) form a coiled coil. The segment at 64 to 82 (LDVQSRKQANRKKALLTRV) is calmodulin-binding. The interval 67 to 82 (QSRKQANRKKALLTRV) is required for interaction with CEP290. Disordered regions lie at residues 147-194 (PVNN…SSAS) and 239-279 (RELS…APPM). Serine 170 is subject to Phosphoserine. Positions 243 to 252 (SRSLRNSLKR) are enriched in low complexity. Residues 253–276 (SVNETHSDRENDAAKASDCVKEKA) show a composition bias toward basic and acidic residues. The interval 349–564 (ENKVKSLKGP…QTQTSRQQMD (216 aa)) is interaction with CEP76. Serine 364, serine 370, and serine 398 each carry phosphoserine. The interval 401 to 433 (GKEEAVDRTAPAAAETTNESETVPKSPTDLTGV) is disordered. The span at 415–433 (ETTNESETVPKSPTDLTGV) shows a compositional bias: polar residues. Residue serine 550 is modified to Phosphoserine. The stretch at 641 to 699 (QELLKSKMLAFEEMRKRLEEQHAQQLSLLIAEQEREQEQLQKEIEEQEKMLKEKAVTTD) forms a coiled coil. 2 calmodulin-binding regions span residues 773–813 (GRAQ…DKLK) and 901–916 (VALSVATQKSLDRKKF). The interval 955 to 1004 (LSRQGTPKTSVKGVVQNRQKPSQSRVPNRAPVSGAYAGKTQRKRPNVATI) is disordered. Positions 970 to 980 (QNRQKPSQSRV) are enriched in polar residues. Over residues 994–1004 (TQRKRPNVATI) the composition is skewed to basic residues.

As to quaternary structure, interacts with CALM1, CETN2, CEP76, CEP104, CEP290 and TALPID3. Interacts with CEP97. Seems to associate with discrete CETN2, CEP97 and CEP290-containing complexes. Interacts with NEURL4 and CCNF; these interactions are not mutually exclusive and both lead to CCP110 ubiquitination and proteasome-dependent degradation. Via its interaction with NEURL4, may indirectly interact with HERC2. Interacts with KIF24, leading to its recruitment to centrioles. Interacts with USP20 and USP33. Interacts with MPHOSPH9. Interacts (via N-terminal region) with ENKD1 (via central region); ENKD1 competes with CEP97 for binding to CCP110, destabilizing the interaction between CP110 and CEP97 which promotes the removal of CCP110 and CEP97 from the mother centriole and allows the initiation of ciliogenesis. Phosphorylated by CDKs. Post-translationally, ubiquitinated by the SCF(CCNF) during G2 phase, leading to its degradation by the proteasome and preventing centrosome reduplication. Deubiquitinated by USP33 in S and G2/M phase, leading to stabilize CCP110 during the period which centrioles duplicate and elongate. Ubiquitinated by the EDVP complex, leading to its degradation.

It localises to the cytoplasm. The protein localises to the cytoskeleton. The protein resides in the microtubule organizing center. Its subcellular location is the centrosome. It is found in the centriole. It localises to the cilium basal body. Functionally, necessary for centrosome duplication at different stages of procentriole formation. Acts as a key negative regulator of ciliogenesis in collaboration with CEP97 by capping the mother centriole thereby preventing cilia formation. Also involved in promoting ciliogenesis. May play a role in the assembly of the mother centriole subdistal appendages (SDA) thereby effecting the fusion of recycling endosomes to basal bodies during cilia formation. Required for correct spindle formation and has a role in regulating cytokinesis and genome stability via cooperation with CALM1 and CETN2. This Mus musculus (Mouse) protein is Centriolar coiled-coil protein of 110 kDa (Ccp110).